Here is a 258-residue protein sequence, read N- to C-terminus: Uroplakin-1a (258 aa).

Residues 1–14 lie on the Cytoplasmic side of the membrane; that stretch reads MASAAAATTEKGSP. The helical transmembrane segment at 15–35 threads the bilayer; that stretch reads VVVGLLVMGNIIILLSGLALF. Topologically, residues 36 to 59 are extracellular; that stretch reads AETVWVTADQYRIYPLMGVSGKDD. Residues 60–86 traverse the membrane as a helical segment; sequence VFAGAWIAIFCGFSFFVVASFGVGAAL. Over 87-91 the chain is Cytoplasmic; the sequence is CRRRS. Residues 92-112 traverse the membrane as a helical segment; that stretch reads MILTYLILMLIIYIFECASCI. Residues 113 to 230 lie on the Extracellular side of the membrane; the sequence is TSYTHRDYMV…HIGHAIDSYT (118 aa). Asparagine 170 carries an N-linked (GlcNAc...) asparagine glycan. The helical transmembrane segment at 231–252 threads the bilayer; sequence WGISWFGFAILMWTLPVMLIAM. Residues 253 to 258 are Cytoplasmic-facing; that stretch reads YFYTTL.

It belongs to the tetraspanin (TM4SF) family. In terms of assembly, homodimer; disulfide-linked. Interacts with uroplakin-2 (UPK2). The N-terminus is blocked. In terms of processing, N-glycosylated with high-mannose oligosaccharides. Bladder epithelium.

The protein resides in the membrane. Component of the asymmetric unit membrane (AUM); a highly specialized biomembrane elaborated by terminally differentiated urothelial cells. May play an important role in normal bladder epithelial physiology, possibly in regulating membrane permeability of superficial umbrella cells or in stabilizing the apical membrane through AUM/cytoskeletal interactions. The sequence is that of Uroplakin-1a (UPK1A) from Bos taurus (Bovine).